A 355-amino-acid chain; its full sequence is Hydroxylysine kinase (355 aa).

The active-site Proton acceptor is Asp-215.

It belongs to the aminoglycoside phosphotransferase family.

The protein resides in the cytoplasm. The enzyme catalyses (5R)-5-hydroxy-L-lysine + GTP = (5R)-5-phosphooxy-L-lysine + GDP + H(+). Its function is as follows. Catalyzes the GTP-dependent phosphorylation of 5-hydroxy-L-lysine. This Danio rerio (Zebrafish) protein is Hydroxylysine kinase (hykk).